The following is a 382-amino-acid chain: uncharacterized protein (382 aa).

A run of 12 helical transmembrane segments spans residues 8 to 28, 45 to 65, 75 to 95, 102 to 122, 131 to 151, 157 to 177, 204 to 224, 231 to 251, 270 to 290, 291 to 311, 325 to 345, and 349 to 369; these read VMLL…LNTL, MVSS…GYLI, YLAS…VGFW, FIAG…LMCS, LLAA…LLVS, LLHV…PLLF, LGVN…GLMP, GMAN…GILG, VQVF…AMAP, ALFI…AWAC, ALLL…AMLM, and SDNL…LMLL.

It belongs to the major facilitator superfamily. YcaD (TC 2.A.1.26) family.

It is found in the cell inner membrane. This is an uncharacterized protein from Salmonella paratyphi B (strain ATCC BAA-1250 / SPB7).